Reading from the N-terminus, the 433-residue chain is Enolase (433 aa).

Position 167 (Gln167) interacts with (2R)-2-phosphoglycerate. Glu209 (proton donor) is an active-site residue. Positions 246, 291, and 318 each coordinate Mg(2+). The (2R)-2-phosphoglycerate site is built by Lys343, Arg372, Ser373, and Lys394. Residue Lys343 is the Proton acceptor of the active site.

Belongs to the enolase family. In terms of assembly, component of the RNA degradosome, a multiprotein complex involved in RNA processing and mRNA degradation. Requires Mg(2+) as cofactor.

It is found in the cytoplasm. It localises to the secreted. Its subcellular location is the cell surface. It catalyses the reaction (2R)-2-phosphoglycerate = phosphoenolpyruvate + H2O. Its pathway is carbohydrate degradation; glycolysis; pyruvate from D-glyceraldehyde 3-phosphate: step 4/5. In terms of biological role, catalyzes the reversible conversion of 2-phosphoglycerate (2-PG) into phosphoenolpyruvate (PEP). It is essential for the degradation of carbohydrates via glycolysis. The protein is Enolase of Edwardsiella ictaluri (strain 93-146).